Here is a 220-residue protein sequence, read N- to C-terminus: Deoxyribose-phosphate aldolase (220 aa).

The active-site Proton donor/acceptor is the Asp89. Lys151 serves as the catalytic Schiff-base intermediate with acetaldehyde. Catalysis depends on Lys180, which acts as the Proton donor/acceptor.

The protein belongs to the DeoC/FbaB aldolase family. DeoC type 1 subfamily.

It localises to the cytoplasm. The catalysed reaction is 2-deoxy-D-ribose 5-phosphate = D-glyceraldehyde 3-phosphate + acetaldehyde. It participates in carbohydrate degradation; 2-deoxy-D-ribose 1-phosphate degradation; D-glyceraldehyde 3-phosphate and acetaldehyde from 2-deoxy-alpha-D-ribose 1-phosphate: step 2/2. Functionally, catalyzes a reversible aldol reaction between acetaldehyde and D-glyceraldehyde 3-phosphate to generate 2-deoxy-D-ribose 5-phosphate. The chain is Deoxyribose-phosphate aldolase from Streptococcus uberis (strain ATCC BAA-854 / 0140J).